Reading from the N-terminus, the 81-residue chain is Apolipoprotein C-I, acidic form (81 aa).

The N-terminal stretch at 1-24 (MRLFLSLLVVVLSIVLEGPTPAQG) is a signal peptide.

It belongs to the apolipoprotein C1 family.

It is found in the secreted. This chain is Apolipoprotein C-I, acidic form (APOC1A), found in Theropithecus gelada (Gelada baboon).